Consider the following 88-residue polypeptide: Probable oxaloacetate decarboxylase gamma chain (88 aa).

The chain crosses the membrane as a helical span at residues Leu-13 to Val-35.

This sequence belongs to the OadG family. In terms of assembly, heterotrimer of an alpha, a beta and a gamma subunit. Requires Na(+) as cofactor.

The protein resides in the cell membrane. The enzyme catalyses oxaloacetate + 2 Na(+)(in) + H(+) = pyruvate + 2 Na(+)(out) + CO2. Functionally, catalyzes the decarboxylation of oxaloacetate coupled to Na(+) translocation. This chain is Probable oxaloacetate decarboxylase gamma chain, found in Mannheimia succiniciproducens (strain KCTC 0769BP / MBEL55E).